Reading from the N-terminus, the 271-residue chain is Thiamine thiazole synthase (271 aa).

NAD(+) contacts are provided by residues serine 39, 58-59, glycine 66, valine 130, and 158-160; these read ER and HVD. Fe cation contacts are provided by aspartate 160 and histidine 175. Position 225 (methionine 225) interacts with NAD(+). Arginine 235 provides a ligand contact to glycine.

The protein belongs to the THI4 family. In terms of assembly, homooctamer; tetramer of dimers. Fe(2+) is required as a cofactor.

The catalysed reaction is hydrogen sulfide + glycine + NAD(+) = ADP-5-ethyl-4-methylthiazole-2-carboxylate + nicotinamide + 3 H2O + H(+). The protein operates within cofactor biosynthesis; thiamine diphosphate biosynthesis. In terms of biological role, involved in the biosynthesis of the thiazole moiety of thiamine. Catalyzes the conversion of NAD and glycine to adenosine diphosphate 5-(2-hydroxyethyl)-4-methylthiazole-2-carboxylate (ADT), an adenylated thiazole intermediate, using free sulfide as a source of sulfur. The sequence is that of Thiamine thiazole synthase from Metallosphaera sedula (strain ATCC 51363 / DSM 5348 / JCM 9185 / NBRC 15509 / TH2).